Consider the following 392-residue polypeptide: Iripin-4 (392 aa).

Residues 1-16 (MRSLATFMSLLTICWG) form the signal peptide. Residues N104, N130, and N265 are each glycosylated (N-linked (GlcNAc...) asparagine).

Belongs to the serpin family. As to expression, female salivary gland.

It is found in the secreted. Serpin with unknown function. Weakly inhibits human granzyme B (GZMB). Acts as a substrate for porcine elastase. This is Iripin-4 from Ixodes ricinus (Common tick).